A 608-amino-acid polypeptide reads, in one-letter code: UvrABC system protein C (608 aa).

In terms of domain architecture, GIY-YIG spans 16 to 94 (NRPGVYRMFD…IKEWRPPYNI (79 aa)). The 36-residue stretch at 204 to 239 (NALADELNVGMEQAAMRLDFEKAAELRDQVAILRRV) folds into the UVR domain.

It belongs to the UvrC family. As to quaternary structure, interacts with UvrB in an incision complex.

It localises to the cytoplasm. Its function is as follows. The UvrABC repair system catalyzes the recognition and processing of DNA lesions. UvrC both incises the 5' and 3' sides of the lesion. The N-terminal half is responsible for the 3' incision and the C-terminal half is responsible for the 5' incision. The sequence is that of UvrABC system protein C from Pseudomonas aeruginosa (strain LESB58).